We begin with the raw amino-acid sequence, 325 residues long: RNA ligase 1 (325 aa).

Mg(2+) serves as cofactor. The cofactor is Mn(2+). AMPylates itself (auto-AMPylation).

It carries out the reaction ATP + (ribonucleotide)n-3'-hydroxyl + 5'-phospho-(ribonucleotide)m = (ribonucleotide)n+m + AMP + diphosphate.. Functionally, functions as an RNA ligase, in vitro. The ligation reaction entails three nucleotidyl transfer steps. In the first step, the RNA ligase reacts with ATP in the absence of nucleic acid to form a covalent ligase-AMP intermediate and release pyrophosphate. In step 2, the ligase-AMP binds to the nucleic acid and transfers the adenylate to the 5'-PO4 terminus to form an adenylylated intermediate. In step 3, the RNA ligase directs the attack of the 3'-OH on the 5'-phosphoanhydride linkage, resulting in a repaired 3'-5' phosphodiester and release of AMP. Exhibits selectivity for single-stranded RNA substrates and may not have nick-sealing activity on double-stranded DNA-RNA hybrids. May play a role in maintaining RNA integrity under stress conditions, for example in response to reactive oxygen species (ROS). The protein is RNA ligase 1 of Danio rerio (Zebrafish).